The chain runs to 445 residues: Trigger factor (445 aa).

The PPIase FKBP-type domain occupies 171–256 (NDIVIIDFKG…VHVVNEVETP (86 aa)).

It belongs to the FKBP-type PPIase family. Tig subfamily.

It localises to the cytoplasm. It catalyses the reaction [protein]-peptidylproline (omega=180) = [protein]-peptidylproline (omega=0). Involved in protein export. Acts as a chaperone by maintaining the newly synthesized protein in an open conformation. Functions as a peptidyl-prolyl cis-trans isomerase. In Malacoplasma penetrans (strain HF-2) (Mycoplasma penetrans), this protein is Trigger factor.